The sequence spans 494 residues: Argininosuccinate synthase, chloroplastic (494 aa).

The N-terminal 73 residues, 1–73 (MAEISATSFP…SRSCKNQAIR (73 aa)), are a transit peptide targeting the chloroplast. Ala74 carries the post-translational modification N-acetylalanine. ATP-binding positions include 102 to 110 (AYSGGLDTS) and Ala129. Positions 181 and 186 each coordinate L-citrulline. Position 211 (Gly211) interacts with ATP. Positions 213, 217, and 218 each coordinate L-aspartate. Asn217 contacts L-citrulline. Arg221, Ser270, Ser279, Glu355, and Tyr367 together coordinate L-citrulline.

This sequence belongs to the argininosuccinate synthase family. Type 1 subfamily. Homotetramer.

Its subcellular location is the plastid. The protein resides in the chloroplast. The enzyme catalyses L-citrulline + L-aspartate + ATP = 2-(N(omega)-L-arginino)succinate + AMP + diphosphate + H(+). Its pathway is amino-acid biosynthesis; L-arginine biosynthesis; L-arginine from L-ornithine and carbamoyl phosphate: step 2/3. This Arabidopsis thaliana (Mouse-ear cress) protein is Argininosuccinate synthase, chloroplastic.